The chain runs to 131 residues: NADH dehydrogenase [ubiquinone] 1 alpha subcomplex subunit 6 (131 aa).

This sequence belongs to the complex I LYR family. Mammalian complex I is composed of 45 different subunits.

The protein localises to the mitochondrion inner membrane. Functionally, accessory subunit of the mitochondrial membrane respiratory chain NADH dehydrogenase (Complex I), that is believed to be not involved in catalysis. Required for proper complex I assembly. Complex I functions in the transfer of electrons from NADH to the respiratory chain. The immediate electron acceptor for the enzyme is believed to be ubiquinone. The protein is NADH dehydrogenase [ubiquinone] 1 alpha subcomplex subunit 6 of Mus musculus (Mouse).